A 130-amino-acid chain; its full sequence is MADNDPLASALSGLDNAESVGHLEQTIQPASNEIGSVLEVFYDRGYVDGFQFVDDGKAGRFEVELKGAINECGAVKPRYSAGADEFEKWEKRFLPARDYGTLIVTTSHGVMSHYEAREQGIGGQVIAYVY.

It belongs to the universal ribosomal protein uS8 family. Part of the 30S ribosomal subunit.

Its function is as follows. One of the primary rRNA binding proteins, it binds directly to 16S rRNA central domain where it helps coordinate assembly of the platform of the 30S subunit. The chain is Small ribosomal subunit protein uS8 from Natronomonas pharaonis (strain ATCC 35678 / DSM 2160 / CIP 103997 / JCM 8858 / NBRC 14720 / NCIMB 2260 / Gabara) (Halobacterium pharaonis).